The following is a 271-amino-acid chain: 3-methyl-2-oxobutanoate hydroxymethyltransferase (271 aa).

2 residues coordinate Mg(2+): aspartate 51 and aspartate 90. 3-methyl-2-oxobutanoate is bound by residues 51–52 (DS), aspartate 90, and lysine 118. Glutamate 120 lines the Mg(2+) pocket. The active-site Proton acceptor is the glutamate 186.

It belongs to the PanB family. Homodecamer; pentamer of dimers. It depends on Mg(2+) as a cofactor.

The protein resides in the cytoplasm. It catalyses the reaction 3-methyl-2-oxobutanoate + (6R)-5,10-methylene-5,6,7,8-tetrahydrofolate + H2O = 2-dehydropantoate + (6S)-5,6,7,8-tetrahydrofolate. Its pathway is cofactor biosynthesis; (R)-pantothenate biosynthesis; (R)-pantoate from 3-methyl-2-oxobutanoate: step 1/2. Functionally, catalyzes the reversible reaction in which hydroxymethyl group from 5,10-methylenetetrahydrofolate is transferred onto alpha-ketoisovalerate to form ketopantoate. The sequence is that of 3-methyl-2-oxobutanoate hydroxymethyltransferase from Stenotrophomonas maltophilia (strain R551-3).